The primary structure comprises 291 residues: Geranyl diphosphate 2-C-methyltransferase (291 aa).

This sequence belongs to the geranyl diphosphate 2-C-methyltransferase family. Mg(2+) serves as cofactor.

It catalyses the reaction (2E)-geranyl diphosphate + S-adenosyl-L-methionine = (E)-2-methylgeranyl diphosphate + S-adenosyl-L-homocysteine + H(+). In terms of biological role, catalyzes the SAM-dependent methylation of geranyl diphosphate (GPP) to yield (E)-2-methylgeranyl diphosphate (2-MeGPP). This Streptomyces ambofaciens (strain ATCC 23877 / 3486 / DSM 40053 / JCM 4204 / NBRC 12836 / NRRL B-2516) protein is Geranyl diphosphate 2-C-methyltransferase.